A 234-amino-acid chain; its full sequence is Leucyl/phenylalanyl-tRNA--protein transferase (234 aa).

Belongs to the L/F-transferase family.

It localises to the cytoplasm. It carries out the reaction N-terminal L-lysyl-[protein] + L-leucyl-tRNA(Leu) = N-terminal L-leucyl-L-lysyl-[protein] + tRNA(Leu) + H(+). The enzyme catalyses N-terminal L-arginyl-[protein] + L-leucyl-tRNA(Leu) = N-terminal L-leucyl-L-arginyl-[protein] + tRNA(Leu) + H(+). It catalyses the reaction L-phenylalanyl-tRNA(Phe) + an N-terminal L-alpha-aminoacyl-[protein] = an N-terminal L-phenylalanyl-L-alpha-aminoacyl-[protein] + tRNA(Phe). Functionally, functions in the N-end rule pathway of protein degradation where it conjugates Leu, Phe and, less efficiently, Met from aminoacyl-tRNAs to the N-termini of proteins containing an N-terminal arginine or lysine. The sequence is that of Leucyl/phenylalanyl-tRNA--protein transferase from Syntrophobacter fumaroxidans (strain DSM 10017 / MPOB).